The following is a 354-amino-acid chain: uncharacterized protein (354 aa).

The protein belongs to the asfivirus B354L family.

This is an uncharacterized protein from Ornithodoros (relapsing fever ticks).